We begin with the raw amino-acid sequence, 224 residues long: Adenylate kinase (224 aa).

10–15 contributes to the ATP binding site; it reads GSGKST. Residues 30-59 are NMP; it reads SSGDMIRAEIEKGSELGKELKKYLAKGELI. AMP-binding positions include Ser-31, Arg-36, 57-59, 83-86, and Gln-90; these read ELI and GYPR. The tract at residues 124 to 161 is LID; that stretch reads GRRICPKCGAVYHLRYRPPKVPGKCDLCGSQLIQREDD. An ATP-binding site is contributed by Arg-125. Residues Cys-128 and Cys-131 each coordinate Zn(2+). 134–135 is an ATP binding site; sequence VY. Residues Cys-148 and Cys-151 each contribute to the Zn(2+) site. AMP contacts are provided by Arg-158 and Arg-169. An ATP-binding site is contributed by Gly-197.

It belongs to the adenylate kinase family. As to quaternary structure, monomer.

It localises to the cytoplasm. The enzyme catalyses AMP + ATP = 2 ADP. It functions in the pathway purine metabolism; AMP biosynthesis via salvage pathway; AMP from ADP: step 1/1. Functionally, catalyzes the reversible transfer of the terminal phosphate group between ATP and AMP. Plays an important role in cellular energy homeostasis and in adenine nucleotide metabolism. The protein is Adenylate kinase of Thermococcus onnurineus (strain NA1).